The following is a 204-amino-acid chain: Somatotropin (204 aa).

Positions 1 to 17 (MERAVLLLSLLSLGVSS) are cleaved as a signal peptide. Gln-18 bears the Pyrrolidone carboxylic acid mark. His-36 lines the Zn(2+) pocket. A disulfide bond links Cys-69 and Cys-177. Glu-186 provides a ligand contact to Zn(2+). Cys-194 and Cys-202 are oxidised to a cystine.

It belongs to the somatotropin/prolactin family.

The protein localises to the secreted. Its function is as follows. Growth hormone plays an important role in growth control and involved in the regulation of several anabolic processes. The protein is Somatotropin (gh) of Perca flavescens (American yellow perch).